A 132-amino-acid polypeptide reads, in one-letter code: Flagellar assembly factor FliW (132 aa).

It belongs to the FliW family. As to quaternary structure, interacts with translational regulator CsrA and flagellin(s).

The protein localises to the cytoplasm. Its function is as follows. Acts as an anti-CsrA protein, binds CsrA and prevents it from repressing translation of its target genes, one of which is flagellin. Binds to flagellin and participates in the assembly of the flagellum. This chain is Flagellar assembly factor FliW, found in Borreliella afzelii (strain PKo) (Borrelia afzelii).